A 235-amino-acid chain; its full sequence is DnaA regulatory inactivator Hda (235 aa).

This sequence belongs to the DnaA family. HdA subfamily. In terms of assembly, the active form seems to be an ADP-bound monomer. Forms the RIDA complex (regulatory inactivation of DnaA) of ATP-DnaA, ADP-Hda and the DNA-loaded beta sliding clamp (dnaN).

Mediates the interaction of DNA replication initiator protein DnaA with DNA polymerase subunit beta sliding clamp (dnaN). Stimulates hydrolysis of ATP-DnaA to ADP-DnaA, rendering DnaA inactive for reinitiation, a process called regulatory inhibition of DnaA or RIDA. The protein is DnaA regulatory inactivator Hda of Yersinia pestis bv. Antiqua (strain Antiqua).